Here is a 306-residue protein sequence, read N- to C-terminus: Large ribosomal subunit protein uL2m (306 aa).

A mitochondrion-targeting transit peptide spans 1 to 60; sequence MALCALTSALRSLSLASAAITARVPTLLPAAQIQSNVLLQLPPALVSPSYRPVHMSADRS.

This sequence belongs to the universal ribosomal protein uL2 family. In terms of assembly, component of the mitochondrial ribosome large subunit (39S) which comprises a 16S rRNA and about 50 distinct proteins.

The protein resides in the mitochondrion. This is Large ribosomal subunit protein uL2m (Mrpl2) from Mus musculus (Mouse).